The sequence spans 322 residues: Ribose-phosphate pyrophosphokinase 1 (322 aa).

Residues 39–41 (DGE) and 98–99 (RQ) contribute to the ATP site. Residues H132 and D173 each coordinate Mg(2+). K196 is a catalytic residue. D-ribose 5-phosphate contacts are provided by residues R198, D224, and 228–232 (DTAGT).

It belongs to the ribose-phosphate pyrophosphokinase family. Class I subfamily. Homohexamer. Mg(2+) is required as a cofactor.

The protein resides in the cytoplasm. The catalysed reaction is D-ribose 5-phosphate + ATP = 5-phospho-alpha-D-ribose 1-diphosphate + AMP + H(+). It participates in metabolic intermediate biosynthesis; 5-phospho-alpha-D-ribose 1-diphosphate biosynthesis; 5-phospho-alpha-D-ribose 1-diphosphate from D-ribose 5-phosphate (route I): step 1/1. Involved in the biosynthesis of the central metabolite phospho-alpha-D-ribosyl-1-pyrophosphate (PRPP) via the transfer of pyrophosphoryl group from ATP to 1-hydroxyl of ribose-5-phosphate (Rib-5-P). The protein is Ribose-phosphate pyrophosphokinase 1 of Streptococcus mutans serotype c (strain ATCC 700610 / UA159).